The chain runs to 294 residues: MSETTTVPPIETVSEPNPFIVFATVATIISAFIGYYFLQQSKKHTPVLKPDEFQKFPLIEKIRVSHNSAIYRFGLPKSTDRLGLPIGQHISIGATIDGKEVVRSYTPISTDDQLGHFDLLIKTYENGNISRHVAGKNVGEHIEIRGPKGFFTYTPNMVKSFGMIAGGTGIAPMYQIITAILKNPEDKTKIHLVYANVTESDILLKEELDNFAARHPDRLKIHYVLNEAPANWQGSVGFVTPEIIDTHLPKASNDTNLLLCGPPPMVSAMKKAAVELGFQKAKPVSKLGDQVFVF.

Residues 18 to 38 (PFIVFATVATIISAFIGYYFL) form a helical membrane-spanning segment. The 104-residue stretch at 51–154 (DEFQKFPLIE…RGPKGFFTYT (104 aa)) folds into the FAD-binding FR-type domain. FAD is bound by residues 134 to 149 (AGKN…GPKG) and 160 to 192 (SFGM…KIHL).

It belongs to the flavoprotein pyridine nucleotide cytochrome reductase family. Monomer. Component of the 2-(3-amino-3-carboxypropyl)histidine synthase complex composed of DPH1, DPH2, DPH3 and a NADH-dependent reductase, predominantly CBR1. FAD is required as a cofactor.

Its subcellular location is the mitochondrion outer membrane. It carries out the reaction 2 Fe(III)-[cytochrome b5] + NADH = 2 Fe(II)-[cytochrome b5] + NAD(+) + H(+). It catalyses the reaction 2 Fe(3+)-[Dph3] + NADH = 2 Fe(2+)-[Dph3] + NAD(+) + H(+). Its pathway is protein modification; peptidyl-diphthamide biosynthesis. Its function is as follows. NADH-dependent reductase for DPH3 and cytochrome b5. Required for the first step of diphthamide biosynthesis, a post-translational modification of histidine which occurs in elongation factor 2. DPH1 and DPH2 transfer a 3-amino-3-carboxypropyl (ACP) group from S-adenosyl-L-methionine (SAM) to a histidine residue, the reaction is assisted by a reduction system comprising DPH3 and a NADH-dependent reductase, predominantly CBR1. By reducing DPH3, also involved in the formation of the tRNA wobble base modification mcm5s 2U (5-methoxycarbonylmethyl-2-thiouridine), mediated by the elongator complex. The cytochrome b5/NADH cytochrome b5 reductase electron transfer system supports the catalytic activity of several sterol biosynthetic enzymes. The sequence is that of NADH-cytochrome b5 reductase 1 (CBR1) from Candida albicans (strain SC5314 / ATCC MYA-2876) (Yeast).